The following is a 244-amino-acid chain: ATP synthase subunit 4, mitochondrial (244 aa).

The transit peptide at 1 to 35 directs the protein to the mitochondrion; the sequence is MSMSMGVRGLALRSVSKTLFSQGVRCPSMVIGARY. Serine 144 is subject to Phosphoserine.

The protein belongs to the eukaryotic ATPase B chain family. F-type ATPases have 2 components, CF(1) - the catalytic core - and CF(0) - the membrane proton channel. In yeast, the dimeric form of ATP synthase consists of 17 polypeptides: alpha, beta, gamma, delta, epsilon, 4 (B), 5 (OSCP), 6 (A), 8, 9 (C), d, E (Tim11), f, g, h, i/j and k.

It is found in the mitochondrion. The protein localises to the mitochondrion inner membrane. Functionally, mitochondrial membrane ATP synthase (F(1)F(0) ATP synthase or Complex V) produces ATP from ADP in the presence of a proton gradient across the membrane which is generated by electron transport complexes of the respiratory chain. F-type ATPases consist of two structural domains, F(1) - containing the extramembraneous catalytic core, and F(0) - containing the membrane proton channel, linked together by a central stalk and a peripheral stalk. During catalysis, ATP synthesis in the catalytic domain of F(1) is coupled via a rotary mechanism of the central stalk subunits to proton translocation. Part of the complex F(0) domain and the peripheric stalk, which acts as a stator to hold the catalytic alpha(3)beta(3) subcomplex and subunit a/ATP6 static relative to the rotary elements. The sequence is that of ATP synthase subunit 4, mitochondrial (ATP4) from Saccharomyces cerevisiae (strain ATCC 204508 / S288c) (Baker's yeast).